The primary structure comprises 179 residues: Calcineurin subunit B type 2 (179 aa).

A lipid anchor (N-myristoyl glycine) is attached at Gly2. 4 consecutive EF-hand domains span residues 18-53, 57-85, 87-122, and 128-163; these read EEIR…QQNP, RVID…FSVK, DEEQ…MVGN, and QLQQ…MEIH. Ca(2+) contacts are provided by Asp31, Asp33, Ser35, Ser37, Glu42, Asp63, Asp65, Asn67, Glu69, Glu74, Asp100, Asp102, Asp104, and Glu111. A calcineurin A binding region spans residues 131–136; it reads QLVDKS. Residues Asp141, Asp143, Asp145, Arg147, and Glu152 each coordinate Ca(2+).

It belongs to the calcineurin regulatory subunit family. As to quaternary structure, forms a complex composed of a calmodulin-dependent catalytic subunit (also known as calcineurin A) and a regulatory Ca(2+)-binding subunit (also known as calcineurin B). There are three catalytic subunits, each encoded by a separate gene (PPP3CA, PPP3CB, and PPP3CC) and two regulatory subunits which are also encoded by separate genes (PPP3R1 and PPP3R2). Interacts with SPATA33 (via PQIIIT motif). In terms of tissue distribution, expressed in osteoblasts and bone marrow (at protein level). Expressed in the testis. Expressed in the sperm midpiece in a SPATA33-dependent manner (at protein level).

It is found in the mitochondrion. Its function is as follows. Regulatory subunit of calcineurin, a calcium-dependent, calmodulin stimulated protein phosphatase. Confers calcium sensitivity. The sequence is that of Calcineurin subunit B type 2 (Ppp3r2) from Mus musculus (Mouse).